Consider the following 387-residue polypeptide: 3-ketoacyl-CoA thiolase (387 aa).

Cysteine 91 functions as the Acyl-thioester intermediate in the catalytic mechanism. Active-site proton acceptor residues include histidine 343 and cysteine 373.

The protein belongs to the thiolase-like superfamily. Thiolase family. In terms of assembly, heterotetramer of two alpha chains (FadB) and two beta chains (FadA).

The protein resides in the cytoplasm. It carries out the reaction an acyl-CoA + acetyl-CoA = a 3-oxoacyl-CoA + CoA. It participates in lipid metabolism; fatty acid beta-oxidation. In terms of biological role, catalyzes the final step of fatty acid oxidation in which acetyl-CoA is released and the CoA ester of a fatty acid two carbons shorter is formed. This Pectobacterium carotovorum subsp. carotovorum (strain PC1) protein is 3-ketoacyl-CoA thiolase.